Here is a 349-residue protein sequence, read N- to C-terminus: MSFHPQTPQSPSHFSPSSSDQSTSMSGSIVSTTTTLPTPAHSVNGSSLANDMSFTDIVMGENSPQKRKRTSDDVGDREQKKVHIEDRKLGIDDLHLDVGEKYLLCRSQHQPPRPHLSEDLFEMYGLADLAAEYARIKDGQKNALRKTYKGHIKKLGVQGHFDSVKTDEKDPERLEYLMGCPQEEWNAHFVRGKEITRGLSSDMKSKISRAVTMSRGAVPSTLWNNSVLGDIAASSMKAHLNQPPSARPTAPNTPLAYGGPAMQRVKPQTPGFQDNRPRRNIKKRGYGDSSFEGYGEGFEDDGGLETGYSTGEGDMASGLKRRKKAQPGTQSYAQARQQSSYGHHGVSGI.

The span at 1 to 28 shows a compositional bias: low complexity; it reads MSFHPQTPQSPSHFSPSSSDQSTSMSGS. 2 disordered regions span residues 1–81 and 238–349; these read MSFH…EQKK and AHLN…VSGI. Residues 29-53 are compositionally biased toward polar residues; that stretch reads IVSTTTTLPTPAHSVNGSSLANDMS. Over residues 70–81 the composition is skewed to basic and acidic residues; it reads TSDDVGDREQKK. The span at 330–341 shows a compositional bias: low complexity; the sequence is QSYAQARQQSSY.

The protein belongs to the Mediator complex subunit 19 family. In terms of assembly, component of the Mediator complex.

The protein resides in the nucleus. In terms of biological role, component of the Mediator complex, a coactivator involved in the regulated transcription of nearly all RNA polymerase II-dependent genes. Mediator functions as a bridge to convey information from gene-specific regulatory proteins to the basal RNA polymerase II transcription machinery. Mediator is recruited to promoters by direct interactions with regulatory proteins and serves as a scaffold for the assembly of a functional preinitiation complex with RNA polymerase II and the general transcription factors. This chain is Mediator of RNA polymerase II transcription subunit 19 (rox3), found in Neurospora crassa (strain ATCC 24698 / 74-OR23-1A / CBS 708.71 / DSM 1257 / FGSC 987).